We begin with the raw amino-acid sequence, 510 residues long: Histidine ammonia-lyase (510 aa).

The segment at residues 143–145 (ASG) is a cross-link (5-imidazolinone (Ala-Gly)). The residue at position 144 (Ser-144) is a 2,3-didehydroalanine (Ser).

This sequence belongs to the PAL/histidase family. In terms of processing, contains an active site 4-methylidene-imidazol-5-one (MIO), which is formed autocatalytically by cyclization and dehydration of residues Ala-Ser-Gly.

It is found in the cytoplasm. It catalyses the reaction L-histidine = trans-urocanate + NH4(+). The protein operates within amino-acid degradation; L-histidine degradation into L-glutamate; N-formimidoyl-L-glutamate from L-histidine: step 1/3. This Aliivibrio fischeri (strain MJ11) (Vibrio fischeri) protein is Histidine ammonia-lyase.